We begin with the raw amino-acid sequence, 417 residues long: NADH-quinone oxidoreductase subunit D (417 aa).

This sequence belongs to the complex I 49 kDa subunit family. NDH-1 is composed of 14 different subunits. Subunits NuoB, C, D, E, F, and G constitute the peripheral sector of the complex.

It localises to the cell inner membrane. It catalyses the reaction a quinone + NADH + 5 H(+)(in) = a quinol + NAD(+) + 4 H(+)(out). Functionally, NDH-1 shuttles electrons from NADH, via FMN and iron-sulfur (Fe-S) centers, to quinones in the respiratory chain. The immediate electron acceptor for the enzyme in this species is believed to be ubiquinone. Couples the redox reaction to proton translocation (for every two electrons transferred, four hydrogen ions are translocated across the cytoplasmic membrane), and thus conserves the redox energy in a proton gradient. In Dechloromonas aromatica (strain RCB), this protein is NADH-quinone oxidoreductase subunit D.